The sequence spans 255 residues: Adenosylcobinamide-GDP ribazoletransferase (255 aa).

6 helical membrane passes run 24–44 (LIAY…SLYV), 45–65 (AIYG…IYIV), 98–118 (VGAG…ISLS), 122–142 (LYIG…MMMI), 164–184 (KHDS…ALLS), and 187–207 (SIMI…MAVI).

Belongs to the CobS family. It depends on Mg(2+) as a cofactor.

The protein localises to the cell membrane. It carries out the reaction alpha-ribazole + adenosylcob(III)inamide-GDP = adenosylcob(III)alamin + GMP + H(+). The enzyme catalyses alpha-ribazole 5'-phosphate + adenosylcob(III)inamide-GDP = adenosylcob(III)alamin 5'-phosphate + GMP + H(+). It functions in the pathway cofactor biosynthesis; adenosylcobalamin biosynthesis; adenosylcobalamin from cob(II)yrinate a,c-diamide: step 7/7. Its function is as follows. Joins adenosylcobinamide-GDP and alpha-ribazole to generate adenosylcobalamin (Ado-cobalamin). Also synthesizes adenosylcobalamin 5'-phosphate from adenosylcobinamide-GDP and alpha-ribazole 5'-phosphate. This is Adenosylcobinamide-GDP ribazoletransferase from Thermoplasma acidophilum (strain ATCC 25905 / DSM 1728 / JCM 9062 / NBRC 15155 / AMRC-C165).